We begin with the raw amino-acid sequence, 358 residues long: Aromatic amino acid aminotransferase (358 aa).

Residue Lys219 is modified to N6-(pyridoxal phosphate)lysine.

It belongs to the class-II pyridoxal-phosphate-dependent aminotransferase family. As to quaternary structure, homodimer. Requires pyridoxal 5'-phosphate as cofactor.

The catalysed reaction is an aromatic L-alpha-amino acid + 2-oxoglutarate = an aromatic oxo-acid + L-glutamate. Its function is as follows. Aminotransferase that catalyzes the conversion of aromatic amino acids and 2-oxoglutarate into corresponding aromatic oxo acids and L-glutamate. This Nocardia farcinica (strain IFM 10152) protein is Aromatic amino acid aminotransferase.